The following is a 159-amino-acid chain: Phosphopantetheine adenylyltransferase (159 aa).

A substrate-binding site is contributed by Thr10. ATP is bound by residues 10 to 11 and His18; that span reads TF. Residues Lys42, Met74, and Arg88 each contribute to the substrate site. ATP-binding positions include 89-91, Glu99, and 124-130; these read GLR and WSFISSS.

This sequence belongs to the bacterial CoaD family. As to quaternary structure, homohexamer. Mg(2+) is required as a cofactor.

Its subcellular location is the cytoplasm. It catalyses the reaction (R)-4'-phosphopantetheine + ATP + H(+) = 3'-dephospho-CoA + diphosphate. It functions in the pathway cofactor biosynthesis; coenzyme A biosynthesis; CoA from (R)-pantothenate: step 4/5. Its function is as follows. Reversibly transfers an adenylyl group from ATP to 4'-phosphopantetheine, yielding dephospho-CoA (dPCoA) and pyrophosphate. The chain is Phosphopantetheine adenylyltransferase from Escherichia coli (strain UTI89 / UPEC).